The following is a 132-amino-acid chain: ATP synthase epsilon chain (132 aa).

Basic and acidic residues predominate over residues 88–102 (IDKERAEAARQRAQE). The tract at residues 88–112 (IDKERAEAARQRAQERLNSQSDDTD) is disordered.

This sequence belongs to the ATPase epsilon chain family. F-type ATPases have 2 components, CF(1) - the catalytic core - and CF(0) - the membrane proton channel. CF(1) has five subunits: alpha(3), beta(3), gamma(1), delta(1), epsilon(1). CF(0) has three main subunits: a, b and c. The F(1)F(0) complex interacts with SpoIIIJ and YqjG; YqgA is found in the same complex.

Its subcellular location is the cell membrane. Functionally, produces ATP from ADP in the presence of a proton gradient across the membrane. This is ATP synthase epsilon chain (atpC) from Bacillus subtilis (strain 168).